Reading from the N-terminus, the 71-residue chain is ATP synthase F(0) complex subunit e, mitochondrial (71 aa).

The residue at position 34 (K34) is an N6-acetyllysine. S68 is subject to Phosphoserine.

It belongs to the ATPase e subunit family. Component of the ATP synthase complex composed at least of ATP5F1A/subunit alpha, ATP5F1B/subunit beta, ATP5MC1/subunit c (homooctomer), MT-ATP6/subunit a, MT-ATP8/subunit 8, ATP5ME/subunit e, ATP5MF/subunit f, ATP5MG/subunit g, ATP5MK/subunit k, ATP5MJ/subunit j, ATP5F1C/subunit gamma, ATP5F1D/subunit delta, ATP5F1E/subunit epsilon, ATP5PF/subunit F6, ATP5PB/subunit b, ATP5PD/subunit d, ATP5PO/subunit OSCP. ATP synthase complex consists of a soluble F(1) head domain (subunits alpha(3) and beta(3)) - the catalytic core - and a membrane F(0) domain - the membrane proton channel (subunits c, a, 8, e, f, g, k and j). These two domains are linked by a central stalk (subunits gamma, delta, and epsilon) rotating inside the F1 region and a stationary peripheral stalk (subunits F6, b, d, and OSCP).

It localises to the mitochondrion. It is found in the mitochondrion inner membrane. Subunit e, of the mitochondrial membrane ATP synthase complex (F(1)F(0) ATP synthase or Complex V) that produces ATP from ADP in the presence of a proton gradient across the membrane which is generated by electron transport complexes of the respiratory chain. ATP synthase complex consist of a soluble F(1) head domain - the catalytic core - and a membrane F(1) domain - the membrane proton channel. These two domains are linked by a central stalk rotating inside the F(1) region and a stationary peripheral stalk. During catalysis, ATP synthesis in the catalytic domain of F(1) is coupled via a rotary mechanism of the central stalk subunits to proton translocation. In vivo, can only synthesize ATP although its ATP hydrolase activity can be activated artificially in vitro. Part of the complex F(0) domain. This chain is ATP synthase F(0) complex subunit e, mitochondrial, found in Pongo abelii (Sumatran orangutan).